The following is a 166-amino-acid chain: Phosphopantetheine adenylyltransferase (166 aa).

Position 14 (Thr-14) interacts with substrate. Residues 14–15 (TF) and His-22 each bind ATP. Substrate is bound by residues Lys-46, Leu-78, and Arg-92. Residues 93–95 (GLR), Glu-103, and 128–134 (WMYLSSS) each bind ATP.

Belongs to the bacterial CoaD family. Homohexamer. Mg(2+) is required as a cofactor.

Its subcellular location is the cytoplasm. It catalyses the reaction (R)-4'-phosphopantetheine + ATP + H(+) = 3'-dephospho-CoA + diphosphate. It functions in the pathway cofactor biosynthesis; coenzyme A biosynthesis; CoA from (R)-pantothenate: step 4/5. In terms of biological role, reversibly transfers an adenylyl group from ATP to 4'-phosphopantetheine, yielding dephospho-CoA (dPCoA) and pyrophosphate. The chain is Phosphopantetheine adenylyltransferase from Maridesulfovibrio salexigens (strain ATCC 14822 / DSM 2638 / NCIMB 8403 / VKM B-1763) (Desulfovibrio salexigens).